A 507-amino-acid polypeptide reads, in one-letter code: ATP synthase subunit alpha, chloroplastic (507 aa).

An ATP-binding site is contributed by 170-177; that stretch reads GDRQTGKT.

Belongs to the ATPase alpha/beta chains family. As to quaternary structure, F-type ATPases have 2 components, CF(1) - the catalytic core - and CF(0) - the membrane proton channel. CF(1) has five subunits: alpha(3), beta(3), gamma(1), delta(1), epsilon(1). CF(0) has four main subunits: a, b, b' and c.

It localises to the plastid. Its subcellular location is the chloroplast thylakoid membrane. It carries out the reaction ATP + H2O + 4 H(+)(in) = ADP + phosphate + 5 H(+)(out). In terms of biological role, produces ATP from ADP in the presence of a proton gradient across the membrane. The alpha chain is a regulatory subunit. This Ceratophyllum demersum (Rigid hornwort) protein is ATP synthase subunit alpha, chloroplastic.